The following is a 565-amino-acid chain: Transcription factor asqA (565 aa).

The segment at 204-273 (MDTAMAQAVR…HSMPALCIDS (70 aa)) is fungal transcription factor domain.

The protein resides in the nucleus. In terms of biological role, transcription factor that regulates specifically the 4'-methoxyviridicatin/aspoquinolone biosynthesis cluster. This Emericella nidulans (strain FGSC A4 / ATCC 38163 / CBS 112.46 / NRRL 194 / M139) (Aspergillus nidulans) protein is Transcription factor asqA.